A 170-amino-acid chain; its full sequence is Peptide deformylase 1 (170 aa).

Residues C92 and H135 each contribute to the Fe cation site. E136 is an active-site residue. H139 provides a ligand contact to Fe cation.

Belongs to the polypeptide deformylase family. Requires Fe(2+) as cofactor.

It catalyses the reaction N-terminal N-formyl-L-methionyl-[peptide] + H2O = N-terminal L-methionyl-[peptide] + formate. Removes the formyl group from the N-terminal Met of newly synthesized proteins. Requires at least a dipeptide for an efficient rate of reaction. N-terminal L-methionine is a prerequisite for activity but the enzyme has broad specificity at other positions. The polypeptide is Peptide deformylase 1 (Coxiella burnetii (strain RSA 493 / Nine Mile phase I)).